The primary structure comprises 263 residues: 3-methyl-2-oxobutanoate hydroxymethyltransferase (263 aa).

Mg(2+) is bound by residues Asp45 and Asp84. Residues 45-46 (DS), Asp84, and Lys112 each bind 3-methyl-2-oxobutanoate. Glu114 is a Mg(2+) binding site. Glu180 functions as the Proton acceptor in the catalytic mechanism.

It belongs to the PanB family. In terms of assembly, homodecamer; pentamer of dimers. Mg(2+) serves as cofactor.

The protein resides in the cytoplasm. The enzyme catalyses 3-methyl-2-oxobutanoate + (6R)-5,10-methylene-5,6,7,8-tetrahydrofolate + H2O = 2-dehydropantoate + (6S)-5,6,7,8-tetrahydrofolate. It functions in the pathway cofactor biosynthesis; (R)-pantothenate biosynthesis; (R)-pantoate from 3-methyl-2-oxobutanoate: step 1/2. In terms of biological role, catalyzes the reversible reaction in which hydroxymethyl group from 5,10-methylenetetrahydrofolate is transferred onto alpha-ketoisovalerate to form ketopantoate. The protein is 3-methyl-2-oxobutanoate hydroxymethyltransferase of Klebsiella pneumoniae (strain 342).